Consider the following 813-residue polypeptide: Cadherin-22 (813 aa).

The N-terminal stretch at 1-33 (MRPRPAGALRAGAALSPVLLLLLLLQLLGHLWA) is a signal peptide. Residues 34 to 621 (ASTPAPSSLS…AFVMAASLSP (588 aa)) are Extracellular-facing. 5 consecutive Cadherin domains span residues 61–165 (WVWN…EPRF), 166–274 (LHGP…PPRF), 275–391 (PQKM…PPEF), 392–495 (RPPS…NPPE), and 496–613 (LATP…TTAF). The N-linked (GlcNAc...) asparagine glycan is linked to N159. 2 N-linked (GlcNAc...) asparagine glycosylation sites follow: N463 and N609. The chain crosses the membrane as a helical span at residues 622–642 (GALIALLVCVLILVVLALLIL). At 643-813 (TLRRHHKSHL…HRGDDEAPAS (171 aa)) the chain is on the cytoplasmic side. The interval 696–726 (GGDPGGGAASPPQAASSSERHSLPRGPSSPE) is disordered.

As to expression, strongly expressed in the pituitary gland and the brain (in the inner granular and glomerular layers of the olfactory bulb, anterior olfactory nucleus, primary olfactory cortex, Purkinje cell layer of cerebellum, and pineal gland). Low expression in lung and heart. No expression in submandibular gland, thymus, liver, spleen, adrenal, and kidney.

It is found in the cell membrane. Cadherins are calcium-dependent cell adhesion proteins. They preferentially interact with themselves in a homophilic manner in connecting cells; cadherins may thus contribute to the sorting of heterogeneous cell types. PB-cadherins may have a role in the morphological organization of pituitary gland and brain tissues. This Rattus norvegicus (Rat) protein is Cadherin-22 (Cdh22).